Here is a 185-residue protein sequence, read N- to C-terminus: Elongation factor P (185 aa).

The protein belongs to the elongation factor P family.

The protein resides in the cytoplasm. Its pathway is protein biosynthesis; polypeptide chain elongation. Functionally, involved in peptide bond synthesis. Stimulates efficient translation and peptide-bond synthesis on native or reconstituted 70S ribosomes in vitro. Probably functions indirectly by altering the affinity of the ribosome for aminoacyl-tRNA, thus increasing their reactivity as acceptors for peptidyl transferase. The protein is Elongation factor P of Fervidobacterium nodosum (strain ATCC 35602 / DSM 5306 / Rt17-B1).